We begin with the raw amino-acid sequence, 373 residues long: UDP-N-acetylglucosamine--N-acetylmuramyl-(pentapeptide) pyrophosphoryl-undecaprenol N-acetylglucosamine transferase (373 aa).

Residues 10–12 (TGG), asparagine 124, serine 195, and glutamine 297 each bind UDP-N-acetyl-alpha-D-glucosamine.

This sequence belongs to the glycosyltransferase 28 family. MurG subfamily.

Its subcellular location is the cell membrane. The catalysed reaction is Mur2Ac(oyl-L-Ala-gamma-D-Glu-L-Lys-D-Ala-D-Ala)-di-trans,octa-cis-undecaprenyl diphosphate + UDP-N-acetyl-alpha-D-glucosamine = beta-D-GlcNAc-(1-&gt;4)-Mur2Ac(oyl-L-Ala-gamma-D-Glu-L-Lys-D-Ala-D-Ala)-di-trans,octa-cis-undecaprenyl diphosphate + UDP + H(+). The protein operates within cell wall biogenesis; peptidoglycan biosynthesis. Cell wall formation. Catalyzes the transfer of a GlcNAc subunit on undecaprenyl-pyrophosphoryl-MurNAc-pentapeptide (lipid intermediate I) to form undecaprenyl-pyrophosphoryl-MurNAc-(pentapeptide)GlcNAc (lipid intermediate II). This chain is UDP-N-acetylglucosamine--N-acetylmuramyl-(pentapeptide) pyrophosphoryl-undecaprenol N-acetylglucosamine transferase, found in Oenococcus oeni (strain ATCC BAA-331 / PSU-1).